Here is a 165-residue protein sequence, read N- to C-terminus: Lymphocyte antigen 6K (165 aa).

The N-terminal stretch at 1–17 (MALLALLLVVALPRVWT) is a signal peptide. Residue asparagine 20 is glycosylated (N-linked (GlcNAc...) asparagine). The UPAR/Ly6 domain occupies 47–141 (ERENTFECQN…VFKEYAGSMG (95 aa)). Residue glycine 138 is the site of GPI-anchor amidated glycine attachment. A propeptide spans 139-165 (SMGESCGGLWLAILLLLASIAAGLSLS) (removed in mature form).

As to quaternary structure, interacts with TEX101. As to expression, specifically expressed in testis (at protein level).

The protein localises to the secreted. Its subcellular location is the cytoplasm. The protein resides in the cell membrane. It is found in the cytoplasmic vesicle. It localises to the secretory vesicle. The protein localises to the acrosome. Its subcellular location is the membrane raft. Its function is as follows. Required for sperm migration into the oviduct and male fertility by controlling binding of sperm to zona pellucida. May play a role in cell growth. The chain is Lymphocyte antigen 6K from Homo sapiens (Human).